We begin with the raw amino-acid sequence, 274 residues long: Cytochrome c oxidase subunit 3 (274 aa).

Transmembrane regions (helical) follow at residues 22–42 (PSPW…GGVM), 47–67 (FAAG…SMLL), 93–113 (GVVL…WAFF), 137–157 (PFEV…TITV), 170–190 (TILY…LQWV), 208–228 (FFVA…FLTV), and 248–268 (AAIW…VSVY).

It belongs to the cytochrome c oxidase subunit 3 family. Component of the cytochrome c oxidase (complex IV, CIV), a multisubunit enzyme composed of a catalytic core of 3 subunits and several supernumerary subunits. The complex exists as a monomer or a dimer and forms supercomplexes (SCs) in the inner mitochondrial membrane with ubiquinol-cytochrome c oxidoreductase (cytochrome b-c1 complex, complex III, CIII).

Its subcellular location is the mitochondrion inner membrane. It catalyses the reaction 4 Fe(II)-[cytochrome c] + O2 + 8 H(+)(in) = 4 Fe(III)-[cytochrome c] + 2 H2O + 4 H(+)(out). In terms of biological role, component of the cytochrome c oxidase, the last enzyme in the mitochondrial electron transport chain which drives oxidative phosphorylation. The respiratory chain contains 3 multisubunit complexes succinate dehydrogenase (complex II, CII), ubiquinol-cytochrome c oxidoreductase (cytochrome b-c1 complex, complex III, CIII) and cytochrome c oxidase (complex IV, CIV), that cooperate to transfer electrons derived from NADH and succinate to molecular oxygen, creating an electrochemical gradient over the inner membrane that drives transmembrane transport and the ATP synthase. Cytochrome c oxidase is the component of the respiratory chain that catalyzes the reduction of oxygen to water. Electrons originating from reduced cytochrome c in the intermembrane space (IMS) are transferred via the dinuclear copper A center (CU(A)) of subunit 2 and heme A of subunit 1 to the active site in subunit 1, a binuclear center (BNC) formed by heme A3 and copper B (CU(B)). The BNC reduces molecular oxygen to 2 water molecules using 4 electrons from cytochrome c in the IMS and 4 protons from the mitochondrial matrix. This Allomyces macrogynus protein is Cytochrome c oxidase subunit 3 (COX3).